We begin with the raw amino-acid sequence, 284 residues long: Tropomyosin (284 aa).

The stretch at 1–284 (MDAIKKKMQA…DMTFTELIGN (284 aa)) forms a coiled coil.

This sequence belongs to the tropomyosin family. In terms of assembly, homodimer.

In terms of biological role, tropomyosin, in association with the troponin complex, plays a central role in the calcium dependent regulation of muscle contraction. The polypeptide is Tropomyosin (Periplaneta fuliginosa (Smokybrown cockroach)).